The following is a 170-amino-acid chain: Photosystem I assembly protein Ycf3 (170 aa).

TPR repeat units lie at residues alanine 35–proline 68, serine 72–leucine 105, and glycine 120–asparagine 153.

It belongs to the Ycf3 family.

Its subcellular location is the plastid. It is found in the chloroplast thylakoid membrane. Its function is as follows. Essential for the assembly of the photosystem I (PSI) complex. May act as a chaperone-like factor to guide the assembly of the PSI subunits. The protein is Photosystem I assembly protein Ycf3 of Gracilaria tenuistipitata var. liui (Red alga).